The primary structure comprises 256 residues: 5-keto-4-deoxy-D-glucarate aldolase (256 aa).

The active-site Proton acceptor is the H50. Position 151 (Q151) interacts with substrate. Position 153 (E153) interacts with Mg(2+). S178 and D179 together coordinate substrate. D179 provides a ligand contact to Mg(2+).

It belongs to the HpcH/HpaI aldolase family. KDGluc aldolase subfamily. As to quaternary structure, homohexamer; trimer of dimers. Requires Mg(2+) as cofactor.

The enzyme catalyses 5-dehydro-4-deoxy-D-glucarate = 2-hydroxy-3-oxopropanoate + pyruvate. It catalyses the reaction 2-dehydro-3-deoxy-D-glucarate = 2-hydroxy-3-oxopropanoate + pyruvate. The protein operates within carbohydrate acid metabolism; galactarate degradation; D-glycerate from galactarate: step 2/3. Catalyzes the reversible retro-aldol cleavage of both 5-keto-4-deoxy-D-glucarate and 2-keto-3-deoxy-D-glucarate to pyruvate and tartronic semialdehyde. The chain is 5-keto-4-deoxy-D-glucarate aldolase from Escherichia coli (strain K12 / DH10B).